The following is a 362-amino-acid chain: Atypical chemokine receptor 3 (362 aa).

Residues 1 to 40 lie on the Extracellular side of the membrane; that stretch reads MDLHLFDYSEPGNFSDISWPCNSSDCIVVDTVMCPNMPNK. 3 N-linked (GlcNAc...) asparagine glycosylation sites follow: Asn-13, Asn-22, and Asn-39. The helical transmembrane segment at 41-61 threads the bilayer; sequence SVLLYTLSFIYIFIFVIGMIA. At 62–81 the chain is on the cytoplasmic side; sequence NSVVVWVNIQAKTTGYDTHC. A helical membrane pass occupies residues 82 to 102; sequence YILNLAIADLWVVLTIPVWVV. Topologically, residues 103–118 are extracellular; sequence SLVQHNQWPMGELTCK. An intrachain disulfide couples Cys-117 to Cys-196. Residues 119–139 traverse the membrane as a helical segment; sequence VTHLIFSINLFGSIFFLTCMS. Residues 140 to 162 lie on the Cytoplasmic side of the membrane; the sequence is VDRYLSITYFTNTPSSRKKMVRR. Residues 163–183 form a helical membrane-spanning segment; the sequence is VVCILVWLLAFCVSLPDTYYL. Residues 184 to 213 lie on the Extracellular side of the membrane; the sequence is KTVTSASNNETYCRSFYPEHSIKEWLIGME. The chain crosses the membrane as a helical span at residues 214–234; that stretch reads LVSVVLGFAVPFSIIAVFYFL. Over 235–252 the chain is Cytoplasmic; the sequence is LARAISASSDQEKHSSRK. The chain crosses the membrane as a helical span at residues 253–273; it reads IIFSYVVVFLVCWLPYHVAVL. At 274 to 296 the chain is on the extracellular side; it reads LDIFSILHYIPFTCRLEHALFTA. The chain crosses the membrane as a helical span at residues 297–319; it reads LHVTQCLSLVHCCVNPVLYSFIN. Residues 320–362 are Cytoplasmic-facing; the sequence is RNYRYELMKAFIFKYSAKTGLTKLIDASRVSETEYSALEQSTK. A C-terminal cytoplasmic tail region spans residues 324-362; sequence YELMKAFIFKYSAKTGLTKLIDASRVSETEYSALEQSTK. Phosphoserine occurs at positions 347, 350, and 355.

It belongs to the G-protein coupled receptor 1 family. Atypical chemokine receptor subfamily. As to quaternary structure, homodimer. Can form heterodimers with CXCR4; heterodimerization may regulate CXCR4 signaling activity. Interacts with ARRB1 and ARRB2. In terms of processing, the Ser/Thr residues in the C-terminal cytoplasmic tail may be phosphorylated. Ubiquitinated at the Lys residues in its C-terminal cytoplasmic tail and is essential for correct trafficking from and to the cell membrane. Deubiquitinated by CXCL12-stimulation in a reversible manner. In terms of tissue distribution, expressed in monocytes, basophils, B-cells, umbilical vein endothelial cells (HUVEC) and B-lymphoblastoid cells. Lower expression detected in CD4+ T-lymphocytes and natural killer cells. In the brain, detected in endothelial cells and capillaries, and in mature neurons of the frontal cortex and hippocampus. Expressed in tubular formation in the kidney. Highly expressed in astroglial tumor endothelial, microglial and glioma cells. Expressed at low levels in normal CD34+ progenitor cells, but at very high levels in several myeloid malignant cell lines. Expressed in breast carcinomas but not in normal breast tissue (at protein level).

Its subcellular location is the cell membrane. It is found in the early endosome. The protein localises to the recycling endosome. Atypical chemokine receptor that controls chemokine levels and localization via high-affinity chemokine binding that is uncoupled from classic ligand-driven signal transduction cascades, resulting instead in chemokine sequestration, degradation, or transcytosis. Also known as interceptor (internalizing receptor) or chemokine-scavenging receptor or chemokine decoy receptor. Acts as a receptor for chemokines CXCL11 and CXCL12/SDF1. Chemokine binding does not activate G-protein-mediated signal transduction but instead induces beta-arrestin recruitment, leading to ligand internalization and activation of MAPK signaling pathway. Required for regulation of CXCR4 protein levels in migrating interneurons, thereby adapting their chemokine responsiveness. In glioma cells, transduces signals via MEK/ERK pathway, mediating resistance to apoptosis. Promotes cell growth and survival. Not involved in cell migration, adhesion or proliferation of normal hematopoietic progenitors but activated by CXCL11 in malignant hemapoietic cells, leading to phosphorylation of ERK1/2 (MAPK3/MAPK1) and enhanced cell adhesion and migration. Plays a regulatory role in CXCR4-mediated activation of cell surface integrins by CXCL12. Required for heart valve development. Regulates axon guidance in the oculomotor system through the regulation of CXCL12 levels. In terms of biological role, (Microbial infection) Acts as a coreceptor with CXCR4 for a restricted number of HIV isolates. This Homo sapiens (Human) protein is Atypical chemokine receptor 3.